Here is a 1008-residue protein sequence, read N- to C-terminus: Phytosulfokine receptor 1 (1008 aa).

The N-terminal stretch at 1–25 (MRVHRFCVIVIFLTELLCFFYSSES) is a signal peptide. 3 N-linked (GlcNAc...) asparagine glycosylation sites follow: Asn55, Asn64, and Asn73. 12 LRR repeats span residues 75–98 (TGRV…SLGK), 99–123 (LDEI…IFNL), 124–148 (KNLQ…NLPA), 150–170 (QSFD…ICHN), 172–194 (TQIR…GFGK), 195–219 (CVLL…LFHL), 221–243 (RLNL…IRNL), 244–266 (SSLV…VFDE), 291–315 (SPSL…CTAM), 316–339 (IALN…LPDC), 341–362 (RLKN…SFKN), and 363–387 (FESL…GILQ). Asn106 is a glycosylation site (N-linked (GlcNAc...) asparagine). Residues Asn160, Asn170, and Asn187 are each glycosylated (N-linked (GlcNAc...) asparagine). The N-linked (GlcNAc...) asparagine glycan is linked to Asn242. Arg300 serves as a coordination point for phytosulfokine. N-linked (GlcNAc...) asparagine glycosylation is found at Asn301 and Asn311. Residues Asn346, Ser370, and Ser372 each coordinate phytosulfokine. N-linked (GlcNAc...) asparagine glycans are attached at residues Asn373, Asn378, and Asn391. 4 LRR repeats span residues 392 to 414 (LTTL…SLHF), 415 to 438 (EKLK…LSSS), 439 to 464 (NELQ…DFKA), and 466 to 486 (FYLD…LTKL). The phytosulfokine site is built by Thr398, Asn424, and Asp445. N-linked (GlcNAc...) asparagine glycosylation is found at Asn472 and Asn493. Lys508 provides a ligand contact to phytosulfokine. Asn510 and Asn534 each carry an N-linked (GlcNAc...) asparagine glycan. LRR repeat units follow at residues 521–545 (IFGF…EFGN), 546–570 (LKKL…LSGM), 571–594 (TSLE…LQQL), and 596–619 (FLSK…QFQT). Asn606 and Asn622 each carry an N-linked (GlcNAc...) asparagine glycan. A helical membrane pass occupies residues 660 to 680 (MAIGIAFGSVFLLTLLSLIVL). At Thr731 the chain carries Phosphothreonine. In terms of domain architecture, Protein kinase spans 734–1005 (FDQANIIGCG…PTTQQLVSWL (272 aa)). Residues 740-748 (IGCGGFGMV) and Lys762 each bind ATP. Phosphotyrosine is present on residues Tyr807 and Tyr847. Catalysis depends on Asp860, which acts as the Proton acceptor. Phosphotyrosine is present on Tyr902.

It belongs to the protein kinase superfamily. Ser/Thr protein kinase family. Homo- and heterodimers with PSY1R. Heterodimers with the somatic embryogenesis receptor-like kinases (SERKs). PSK is not directly involved in PSKR-SERK interaction but stabilizes PSKR island domain for recruitment of a SERK. Part of a functional complex containing PSKR1, BAK1, CNGC17, and AHA. Interacts with AHA1, AHA2, and BAK1, but not with CNGC17 or BRI1. Mg(2+) is required as a cofactor. It depends on Mn(2+) as a cofactor. As to expression, weakly expressed in roots, leaves, stems and flowers. Expressed in the primary and lateral roots, including root primordia and root tips, but not in the hypocotyl.

It is found in the cell membrane. The catalysed reaction is L-seryl-[protein] + ATP = O-phospho-L-seryl-[protein] + ADP + H(+). The enzyme catalyses L-threonyl-[protein] + ATP = O-phospho-L-threonyl-[protein] + ADP + H(+). It catalyses the reaction GTP = 3',5'-cyclic GMP + diphosphate. With respect to regulation, cGMP suppresses kinase activity. Its function is as follows. Phytosulfokine receptor with both a serine/threonine-protein kinase activity and a guanylate cyclase activity. Regulates, in response to phytosulfokine binding, a signaling cascade involved in plant cell differentiation, organogenesis, somatic embryogenesis, cellular proliferation and plant growth. Involved in plant immunity, with antagonistic effects on bacterial and fungal resistances. Not involved in PSY perception. CNGC17 and AHAs form a functional cation-translocating unit that is activated by PSKR1/BAK1 and possibly other BAK1/RLK complexes. The protein is Phytosulfokine receptor 1 of Arabidopsis thaliana (Mouse-ear cress).